The chain runs to 1482 residues: Chromosome partition protein MukB (1482 aa).

34–41 (GGNGAGKS) contributes to the ATP binding site. A coiled-coil region spans residues 333–665 (ASDHLNLVQT…LEKQIERLSQ (333 aa)). The flexible hinge stretch occupies residues 666 to 783 (PSGAEDSRMI…ELPLFGRAAR (118 aa)). 2 coiled-coil regions span residues 784-1116 (ENRL…AKAG) and 1209-1260 (VDAI…MLNQ).

This sequence belongs to the SMC family. MukB subfamily. In terms of assembly, homodimerization via its hinge domain. Binds to DNA via its C-terminal region. Interacts, and probably forms a ternary complex, with MukE and MukF via its C-terminal region. The complex formation is stimulated by calcium or magnesium. Interacts with tubulin-related protein FtsZ.

It localises to the cytoplasm. Its subcellular location is the nucleoid. In terms of biological role, plays a central role in chromosome condensation, segregation and cell cycle progression. Functions as a homodimer, which is essential for chromosome partition. Involved in negative DNA supercoiling in vivo, and by this means organize and compact chromosomes. May achieve or facilitate chromosome segregation by condensation DNA from both sides of a centrally located replisome during cell division. In Photorhabdus laumondii subsp. laumondii (strain DSM 15139 / CIP 105565 / TT01) (Photorhabdus luminescens subsp. laumondii), this protein is Chromosome partition protein MukB.